Here is a 522-residue protein sequence, read N- to C-terminus: Neutral amino acid uniporter 4 (522 aa).

10 consecutive transmembrane segments (helical) span residues 115–135 (AGVLLGPISLLFFGIISIHCM), 181–201 (LVDWFLVVTQLGFCSVYFVFL), 226–246 (SLDLRIYMFSFLPLIIPLVFI), 255–275 (LSFFANVSMAISLLIVYQYVI), 293–313 (YPLFFGTAIFAFEGIGVVLPL), 329–349 (IGMAIVTTLYISLATLGYFCF), 377–397 (FGIYVTYAIQYYVPAEIILPA), 409–429 (LCEFTMRFFLVCLTCAVAVLI), 435–455 (VISFVGAVSSSTLALILPPLV), and 467–487 (PWVIMKDVGIAVIGFVGFIAG). N-linked (GlcNAc...) asparagine glycosylation occurs at asparagine 515.

This sequence belongs to the amino acid/polyamine transporter 2 family.

The protein localises to the lysosome membrane. It carries out the reaction L-tryptophan(in) = L-tryptophan(out). It catalyses the reaction L-alanine(in) = L-alanine(out). The enzyme catalyses L-proline(in) = L-proline(out). Uniporter that mediates the transport of neutral amino acids like L-tryptophan, proline and alanine. The transport activity is sodium ions-independent, electroneutral and therefore functions via facilitated diffusion. This chain is Neutral amino acid uniporter 4, found in Xenopus laevis (African clawed frog).